Here is a 550-residue protein sequence, read N- to C-terminus: U-box domain-containing protein 40 (550 aa).

Residues 19 to 29 (KSDNLSRRESL) are compositionally biased toward basic and acidic residues. The interval 19 to 55 (KSDNLSRRESLAGKSKWRTSLSRSSSSSSSNNNSPTK) is disordered. Low complexity predominate over residues 38-52 (SLSRSSSSSSSNNNS). The U-box domain occupies 57–127 (EIPAEFLCPI…HSWCERRCFP (71 aa)). ARM repeat units lie at residues 260-299 (ESSRISLCTTRVISALKSLIVSRYATVQVNVTAVLVNLSL), 301-340 (KSNKVKIVRSGIVPPLIDVLKCGSVEAQEHSAGVIFSLAL), 342-381 (DENKTAIGVLGGLEPLLHLIRVGTELTRHDSALALYHLSL), 383-420 (QSNRGKLVKLGAVQMLLGMVSLGQMIGRVLLILCNMAS), and 422-464 (PVSR…GLSH).

It catalyses the reaction S-ubiquitinyl-[E2 ubiquitin-conjugating enzyme]-L-cysteine + [acceptor protein]-L-lysine = [E2 ubiquitin-conjugating enzyme]-L-cysteine + N(6)-ubiquitinyl-[acceptor protein]-L-lysine.. It participates in protein modification; protein ubiquitination. Functions as an E3 ubiquitin ligase. The protein is U-box domain-containing protein 40 (PUB40) of Arabidopsis thaliana (Mouse-ear cress).